Consider the following 130-residue polypeptide: Fumarate reductase subunit C (130 aa).

3 consecutive transmembrane segments (helical) span residues valine 34–valine 54, phenylalanine 60–alanine 80, and isoleucine 109–leucine 129.

This sequence belongs to the FrdC family. Part of an enzyme complex containing four subunits: a flavoprotein (FrdA), an iron-sulfur protein (FrdB), and two hydrophobic anchor proteins (FrdC and FrdD).

It localises to the cell inner membrane. In terms of biological role, two distinct, membrane-bound, FAD-containing enzymes are responsible for the catalysis of fumarate and succinate interconversion; fumarate reductase is used in anaerobic growth, and succinate dehydrogenase is used in aerobic growth. Anchors the catalytic components of the fumarate reductase complex to the cell inner membrane, binds quinones. The chain is Fumarate reductase subunit C from Serratia proteamaculans (strain 568).